A 689-amino-acid polypeptide reads, in one-letter code: Sodium-dependent phosphate transport protein 2B (689 aa).

The tract at residues 1–41 is disordered; that stretch reads MAPWPELGDAQPNPDKYLEGAAGQQPTAPDKSKETNKNNTE. Residues 1–100 are Cytoplasmic-facing; that stretch reads MAPWPELGDA…LCVFQGIGRL (100 aa). The helical transmembrane segment at 101–121 threads the bilayer; sequence ILLLGFLYFFVCSLDILSSAF. Over 122-135 the chain is Extracellular; that stretch reads QLVGGKMAGQFFSN. A helical membrane pass occupies residues 136-156; the sequence is SSIMSNPLLGLVIGVLVTVLV. Residues 157–212 are Cytoplasmic-facing; that stretch reads QSSSTSTSIVVSMVSSSLLTVRAAIPIIMGANIGTSITNTIVALMQVGDRSEFRRA. The chain crosses the membrane as a helical span at residues 213 to 233; the sequence is FAGATVHDFFNWLSVLVLLPV. Residues 234 to 362 are Extracellular-facing; that stretch reads EVATHYLEII…FVNFHLPDLA (129 aa). N-linked (GlcNAc...) asparagine glycans are attached at residues N294, N307, and N320. Cysteines 302 and 349 form a disulfide. Residues 363–383 form a helical membrane-spanning segment; that stretch reads VGTILLILSLLVLCGCLIMIV. The Cytoplasmic portion of the chain corresponds to 384–407; it reads KILGSVLKGQVATVIKKTINTDFP. Residues 408–428 form a helical membrane-spanning segment; it reads FPFAWLTGYLAILVGAGMTFI. The Extracellular portion of the chain corresponds to 429–485; it reads VQSSSVFTSALTPLIGIGVITIERAYPLTLGSNIGTTTTAILAALASPGNALRSSLQ. The chain crosses the membrane as a helical span at residues 486-506; it reads IALCHFFFNISGILLWYPIPF. The Cytoplasmic portion of the chain corresponds to 507-525; sequence TRLPIRMAKGLGNISAKYR. Residues 526–546 form a helical membrane-spanning segment; that stretch reads WFAVFYLIIFFFLIPLTVFGL. Residues 547–552 are Extracellular-facing; that stretch reads SLAGWR. Residues 553 to 573 form a helical membrane-spanning segment; that stretch reads VLVGVGVPVVFIIILVLCLRL. Residues 574–687 are Cytoplasmic-facing; that stretch reads LQSRCPRVLP…PASDSKTECT (114 aa).

The protein belongs to the SLC34A transporter family.

It is found in the apical cell membrane. The catalysed reaction is 3 Na(+)(out) + phosphate(out) = 3 Na(+)(in) + phosphate(in). Involved in actively transporting phosphate into cells via Na(+) cotransport. The protein is Sodium-dependent phosphate transport protein 2B (SLC34A2) of Pongo abelii (Sumatran orangutan).